Reading from the N-terminus, the 378-residue chain is Signal recognition particle receptor FtsY (378 aa).

GTP contacts are provided by residues 184-191, 266-270, and 330-333; these read GVNGTGKT, DTAGR, and TKLD.

It belongs to the GTP-binding SRP family. FtsY subfamily. In terms of assembly, part of the signal recognition particle protein translocation system, which is composed of SRP and FtsY. SRP is a ribonucleoprotein composed of Ffh and a 4.5S RNA molecule.

It is found in the cell membrane. The protein resides in the cytoplasm. The enzyme catalyses GTP + H2O = GDP + phosphate + H(+). Its function is as follows. Involved in targeting and insertion of nascent membrane proteins into the cytoplasmic membrane. Acts as a receptor for the complex formed by the signal recognition particle (SRP) and the ribosome-nascent chain (RNC). Interaction with SRP-RNC leads to the transfer of the RNC complex to the Sec translocase for insertion into the membrane, the hydrolysis of GTP by both Ffh and FtsY, and the dissociation of the SRP-FtsY complex into the individual components. The protein is Signal recognition particle receptor FtsY of Buchnera aphidicola subsp. Acyrthosiphon pisum (strain APS) (Acyrthosiphon pisum symbiotic bacterium).